We begin with the raw amino-acid sequence, 1008 residues long: RNA cytidine acetyltransferase (1008 aa).

ATP is bound by residues 282–291 and R443; that span reads GRGKSAALGL. One can recognise an N-acetyltransferase domain in the interval 531–713; sequence CLLGPVQRMD…VPVYLSQKSN (183 aa). Acetyl-CoA is bound by residues 601-603, 608-614, and N700; these read VAT and QRMGYGK. Residue S907 is modified to Phosphoserine. The tract at residues 950 to 1008 is disordered; sequence ALETNGTGGGSGLLSVKSGVKRLDGPIETREDGDLAAPLSKKKKKNNPKQRRSQGKSLI. Basic and acidic residues predominate over residues 970-982; it reads KRLDGPIETREDG. Over residues 989-1008 the composition is skewed to basic residues; it reads SKKKKKNNPKQRRSQGKSLI.

The protein belongs to the RNA cytidine acetyltransferase family. NAT10 subfamily. Component of the PRC1 complex (PSC, PC, PH and dRING1) in 0-12 hours Drosophila embryos. This complex is distinct from the Esc/E(z) complex, which contains many other PcG proteins like Esc, E(z), Su(z)12, HDAC1/Rpd3, Caf1-55 and probably Pho. The two complexes however cooperate and interact together during the first 3 hours of development to establish PcG silencing. Part of the small subunit (SSU) processome, composed of more than 70 proteins and the RNA chaperone small nucleolar RNA (snoRNA) U3.

The protein resides in the nucleus. Its subcellular location is the nucleolus. It carries out the reaction a cytidine in 18S rRNA + acetyl-CoA + ATP + H2O = an N(4)-acetylcytidine in 18S rRNA + ADP + phosphate + CoA + H(+). It catalyses the reaction a cytidine in tRNA + acetyl-CoA + ATP + H2O = an N(4)-acetylcytidine in tRNA + ADP + phosphate + CoA + H(+). In terms of biological role, RNA cytidine acetyltransferase with specificity toward both 18S rRNA and tRNAs. Catalyzes the formation of N(4)-acetylcytidine (ac4C) in 18S rRNA. Required for early nucleolar cleavages of precursor rRNA at sites A0, A1 and A2 during 18S rRNA synthesis. Catalyzes the formation of ac4C in serine and leucine tRNAs. Requires a tRNA-binding adapter protein for full tRNA acetyltransferase activity but not for 18S rRNA acetylation. Polycomb group (PcG) protein. PcG proteins act by forming multiprotein complexes, which are required to maintain the transcriptionally repressive state of homeotic genes throughout development. PcG proteins are not required to initiate repression, but to maintain it during later stages of development. They probably act via the methylation of histones, rendering chromatin heritably changed in its expressibility. Part of the small subunit (SSU) processome, first precursor of the small eukaryotic ribosomal subunit. During the assembly of the SSU processome in the nucleolus, many ribosome biogenesis factors, an RNA chaperone and ribosomal proteins associate with the nascent pre-rRNA and work in concert to generate RNA folding, modifications, rearrangements and cleavage as well as targeted degradation of pre-ribosomal RNA by the RNA exosome. This is RNA cytidine acetyltransferase (l(1)G0020) from Drosophila melanogaster (Fruit fly).